Consider the following 551-residue polypeptide: Putative transport protein CGSHiGG_02670 (551 aa).

The next 5 helical transmembrane spans lie at 4–24 (IAITISLLALVAVIGLWIGHW), 28–48 (GVGLGIGGVLFGGIIVAHFTN), 65–85 (FGLILFVYTIGIQVGPGFFSS), 95–115 (AFAILIIVLGSIAVVLVHKIA), and 157–177 (VSYAMAYPFGICGILLAMWLI). 2 consecutive RCK C-terminal domains span residues 191-275 (RFNA…IIGH) and 277-360 (VDAP…VIGN). Helical transmembrane passes span 370–390 (MLPVFIGIGLGVLVGSIPFYI), 402–424 (AGGPLVVALILARIGTIGKLYWF), 438–458 (IVLFLAVVGLKSGGSFFDTLV), 463–483 (LEWMGYGIFITFVPLIIVGTI), 492–512 (YLTICGLLAGSMTDPPALAFA), and 529–549 (VYPLVMFLRIMSPQLLAVLLW).

Belongs to the AAE transporter (TC 2.A.81) family. YidE subfamily.

Its subcellular location is the cell membrane. The polypeptide is Putative transport protein CGSHiGG_02670 (Haemophilus influenzae (strain PittGG)).